The following is a 347-amino-acid chain: Protein RecA (347 aa).

67-74 serves as a coordination point for ATP; that stretch reads GPESSGKT.

Belongs to the RecA family.

It is found in the cytoplasm. Can catalyze the hydrolysis of ATP in the presence of single-stranded DNA, the ATP-dependent uptake of single-stranded DNA by duplex DNA, and the ATP-dependent hybridization of homologous single-stranded DNAs. It interacts with LexA causing its activation and leading to its autocatalytic cleavage. This Helicobacter pylori (strain P12) protein is Protein RecA.